A 164-amino-acid polypeptide reads, in one-letter code: Cyclic pyranopterin monophosphate synthase (164 aa).

Substrate is bound by residues 73-75 (LCH) and 111-112 (ME). Aspartate 126 is a catalytic residue.

The protein belongs to the MoaC family. In terms of assembly, homohexamer; trimer of dimers.

It catalyses the reaction (8S)-3',8-cyclo-7,8-dihydroguanosine 5'-triphosphate = cyclic pyranopterin phosphate + diphosphate. Its pathway is cofactor biosynthesis; molybdopterin biosynthesis. Catalyzes the conversion of (8S)-3',8-cyclo-7,8-dihydroguanosine 5'-triphosphate to cyclic pyranopterin monophosphate (cPMP). In Herpetosiphon aurantiacus (strain ATCC 23779 / DSM 785 / 114-95), this protein is Cyclic pyranopterin monophosphate synthase.